The following is a 167-amino-acid chain: NAD(P)H-quinone oxidoreductase subunit I, chloroplastic (167 aa).

4Fe-4S ferredoxin-type domains are found at residues 55–84 (GRIH…VDWK) and 95–124 (LNYS…MTEE). [4Fe-4S] cluster contacts are provided by C64, C67, C70, C74, C104, C107, C110, and C114.

It belongs to the complex I 23 kDa subunit family. As to quaternary structure, NDH is composed of at least 16 different subunits, 5 of which are encoded in the nucleus. It depends on [4Fe-4S] cluster as a cofactor.

It is found in the plastid. The protein resides in the chloroplast thylakoid membrane. It catalyses the reaction a plastoquinone + NADH + (n+1) H(+)(in) = a plastoquinol + NAD(+) + n H(+)(out). The enzyme catalyses a plastoquinone + NADPH + (n+1) H(+)(in) = a plastoquinol + NADP(+) + n H(+)(out). NDH shuttles electrons from NAD(P)H:plastoquinone, via FMN and iron-sulfur (Fe-S) centers, to quinones in the photosynthetic chain and possibly in a chloroplast respiratory chain. The immediate electron acceptor for the enzyme in this species is believed to be plastoquinone. Couples the redox reaction to proton translocation, and thus conserves the redox energy in a proton gradient. This chain is NAD(P)H-quinone oxidoreductase subunit I, chloroplastic, found in Morus indica (Mulberry).